A 248-amino-acid polypeptide reads, in one-letter code: Triosephosphate isomerase (248 aa).

9–11 (NWK) is a binding site for substrate. His94 acts as the Electrophile in catalysis. Glu166 acts as the Proton acceptor in catalysis. Substrate contacts are provided by residues Gly172, Ser212, and 233 to 234 (GG).

It belongs to the triosephosphate isomerase family. Homodimer.

Its subcellular location is the cytoplasm. The enzyme catalyses D-glyceraldehyde 3-phosphate = dihydroxyacetone phosphate. The protein operates within carbohydrate biosynthesis; gluconeogenesis. Its pathway is carbohydrate degradation; glycolysis; D-glyceraldehyde 3-phosphate from glycerone phosphate: step 1/1. Its function is as follows. Involved in the gluconeogenesis. Catalyzes stereospecifically the conversion of dihydroxyacetone phosphate (DHAP) to D-glyceraldehyde-3-phosphate (G3P). The protein is Triosephosphate isomerase of Clostridium beijerinckii (strain ATCC 51743 / NCIMB 8052) (Clostridium acetobutylicum).